The primary structure comprises 1122 residues: Breast carcinoma-amplified sequence 3 homolog (1122 aa).

Positions 1-41 are disordered; it reads MSADSPRRHPSGVVGSGIGLGSGSGTGLGSGSTGGSKSGAA. The segment covering 14–37 has biased composition (gly residues); the sequence is VGSGIGLGSGSGTGLGSGSTGGSK. Residue serine 55 is modified to Phosphoserine. Low complexity-rich tracts occupy residues 357–377, 626–641, 966–987, and 1036–1051; these read GTTA…ASGG, GSNS…SLSD, TKDN…PSSN, and LSLE…PLSL. 5 disordered regions span residues 357-382, 620-644, 966-990, 1033-1054, and 1071-1122; these read GTTA…DAKQ, GVGV…DDSG, TKDN…NKVQ, NSRL…LTNG, and GVAQ…RRNL. Serine 638 carries the post-translational modification Phosphoserine. Residues 1087 to 1112 are compositionally biased toward acidic residues; the sequence is VDDDDEEEEEEEEELDEEAEPDDDER. A compositionally biased stretch (basic and acidic residues) spans 1113 to 1122; it reads EDRPLGRRNL.

The protein belongs to the BCAS3 family. In terms of tissue distribution, expressed in all postembryonic pericardial cells, but not in cardioblasts. Also expressed in Garland cells in third instar larvae (at protein level).

It localises to the cytoplasm. Functionally, regulates macropinocytosis in pericardial cells. The polypeptide is Breast carcinoma-amplified sequence 3 homolog (rudhira) (Drosophila melanogaster (Fruit fly)).